A 1508-amino-acid polypeptide reads, in one-letter code: MSLGPGGFEATPNSVMPSDASLHNQSHHTDSLTNNDSIASTEQREKEVHQLARKYTQNSVYSTTSQNPFAAEPGSKLDPNGGNFSARAWAKAMLQTHTDDNQAHPLRTLGVSFSNLNVYGFGFDTDYQKSVGNIWLEAVGLVRKLMGQRERKIEILRDLEGLVEAGEMLVVLGPPGAGCSTFLKTLTGQTHGFYVDDKSNLNYQGVTPKQLIKNFRGEAIYTAEVDVHFPNITVGDTLFFAARARAPRHIPGGATIDQYAEHMRDVIMASFGISHTKNTIVGNDFIRGVSGGERKRVSISEACLSQAPLQCWDNSTRGLDSANAIEFCKTLRMQTEINGATACVAIYQAPQAAYDYFDKVLVLYKGRQIYFGPTAQAKQYFLNMGFVCPDRQTDADFLTSMTSHLERVVQPGYENQVPRTPDEFAARWKASRERAELLNQIEMYNSKYATGGEHLERFKESRRAQQAKAQRVSSPYTLSYTQQIKLCLWRSWVRLKGDPSITISSAMGNAIIALIISSMFFNLKDDTSSFFQRGSLLFFAIVINAFSSGLEMLTLYAQRPIVEKHSRFALYHPSAEAIASMLMDLPYKTLNAISSNLILYFMTNLRREPGNFFFFVFTSFVLTLTMSMFFRSIASLTRSLVEALPFAAILITGLTMYTGFTIPTSYMPGWSRWMAYIDPIAYGFESIMVNEFSGREFLCVNYVPAGPSYNVGGNNRVCSTVGSVPGQPFVLGDDYIRSTYGYEASRKWRNVGIIFAFMVILCAIYLVASDFITEKKSKGEILVFRRGHKNLDRSTGQDDVEGGSERTTTAANTKSDDIAIIEQQTAIFQWKDICYDIQIQKERRRILDHVDGWVKPGTLTALMGVSGAGKTTLLDVLASRTTMGVISGEMLVDGKERDDSFQRKTGYAQQQDLHLSTATVREALTFSALLRQPAHIPREEKIAYVTEVIKLLEMTEFADAVVGIPGEGLNVEQRKRLTIGVELAARPALLLFLDEPTSGLDSQTSWAILDLLDKLKKNGQAILCTIHQPSAMLFQRFDRLLFLKSGGQTVYYGDVGENSKILIDYFTRNGGPPCPPAANPAEWMLEVIGAAPGSHTDIDWHDTWRKSPEYAYVQAHLAELKEERSRMTDLSRTASRQAHDAASFREFAAPFWAQFYEVQLRVFQQLWRTPTYIYSKAFLCVSTSLYVGFSLYNTPNTLQGLQNQMFAIFTLFFLFGQFIQQIMPHFVAQRALYEARERPSKTYSWKAFIMSNIIVELPWNTLMSVLLFLCWYYPIGLSHNAEATDSTALRGAQMWLFVWVFLMFASTFAHFMIAALDTAENAGNMGNLLFTLCVIFCGILTTPEQMPRFWIFMYRVSPFTYLVGGMMAVGVADSSVTCAANEYLHFDPVNGTCGEYMAQYQAMAGGYVQNPSATSNCAFCPMGDTNVFLKTVHAEYSNVWRNFGLMWVFVVFNAFAACGLYYWARVPKRPTIEKEAAPIRAEGSLDSETVVGRTSAVEQQDAEKRAAF.

2 disordered regions span residues 1-35 (MSLGPGGFEATPNSVMPSDASLHNQSHHTDSLTNN) and 54-82 (KYTQNSVYSTTSQNPFAAEPGSKLDPNGG). A compositionally biased stretch (polar residues) spans 11–24 (TPNSVMPSDASLHN). Asn-24 and Asn-35 each carry an N-linked (GlcNAc...) asparagine glycan. A compositionally biased stretch (polar residues) spans 55-68 (YTQNSVYSTTSQNP). Residues Asn-83, Asn-231, and Asn-314 are each glycosylated (N-linked (GlcNAc...) asparagine). The ABC transporter 1 domain maps to 136–390 (LEAVGLVRKL…FLNMGFVCPD (255 aa)). Helical transmembrane passes span 501 to 521 (ITISSAMGNAIIALIISSMFF), 536 to 556 (LLFFAIVINAFSSGLEMLTLY), 610 to 630 (GNFFFFVFTSFVLTLTMSMFF), 643 to 663 (ALPFAAILITGLTMYTGFTIP), and 752 to 772 (GIIFAFMVILCAIYLVASDFI). The ABC transporter 2 domain occupies 828–1070 (FQWKDICYDI…ILIDYFTRNG (243 aa)). Position 864-871 (864-871 (GVSGAGKT)) interacts with ATP. Helical transmembrane passes span 1172-1192 (YIYSKAFLCVSTSLYVGFSLY), 1206-1226 (FAIFTLFFLFGQFIQQIMPHF), 1296-1316 (LFVWVFLMFASTFAHFMIAAL), and 1322-1342 (AGNMGNLLFTLCVIFCGILTT). The N-linked (GlcNAc...) asparagine glycan is linked to Asn-1390. Residues 1443-1463 (FGLMWVFVVFNAFAACGLYYW) traverse the membrane as a helical segment.

This sequence belongs to the ABC transporter superfamily. ABCG family. PDR (TC 3.A.1.205) subfamily.

Its subcellular location is the cell membrane. ABC-type transporter; part of the gene cluster that mediates the biosynthesis of the sesterterpenes ophiobolins, fungal phytotoxins with potential anti-cancer activities. Acts as a specific transporter involved in ophiobolins secretion. The sequence is that of ABC-type transporter oblD from Cochliobolus heterostrophus (strain C5 / ATCC 48332 / race O) (Southern corn leaf blight fungus).